The sequence spans 215 residues: E3 ubiquitin-protein ligase NleG (215 aa).

The segment at 136–189 (CPITLCIPETGVFVRNAKNSEICSLYDHNALTELIRRNAPHPLSREPFVPEMIV) is RING/U-box domain. The short motif at 213 to 215 (TRI) is the PDZ-binding motif element.

Belongs to the NleG E3 ligase family. In terms of assembly, interacts with host GOPC (human protein). Two sizes of protein are detected upon expression in C.rodentium; only the smaller protein is secreted.

The protein localises to the secreted. It localises to the host cytoplasm. It catalyses the reaction S-ubiquitinyl-[E2 ubiquitin-conjugating enzyme]-L-cysteine + [acceptor protein]-L-lysine = [E2 ubiquitin-conjugating enzyme]-L-cysteine + N(6)-ubiquitinyl-[acceptor protein]-L-lysine.. Functionally, effector proteins function to alter host cell physiology and promote bacterial survival in host tissues. This protein is an E3 ubiquitin-protein ligase that probably interferes with the host's ubiquitination pathway and targets host proteins for proteasomal degradation. Can ubiquitinate ubiquitin, giving rise to polyubiquitin chains (in vitro). Does not complement an nleG8 deletion in C.rodentium. This Escherichia coli O157:H7 protein is E3 ubiquitin-protein ligase NleG.